Here is a 336-residue protein sequence, read N- to C-terminus: NADH-cytochrome b5 reductase 2 (336 aa).

Residues 28-50 (GGSSNGALYVGIGAAGLAGAYIY) traverse the membrane as a helical segment. The region spanning 84-189 (QGFISLLLDK…KGPIPKYPWS (106 aa)) is the FAD-binding FR-type domain. 192 to 227 (KHEHIALIAGGTGITPMWQTARAIFKNPEDKTKVTL) lines the FAD pocket.

The protein belongs to the flavoprotein pyridine nucleotide cytochrome reductase family. It depends on FAD as a cofactor.

The protein resides in the mitochondrion outer membrane. The catalysed reaction is 2 Fe(III)-[cytochrome b5] + NADH = 2 Fe(II)-[cytochrome b5] + NAD(+) + H(+). Functionally, may mediate the reduction of outer membrane cytochrome b5. In Phaeosphaeria nodorum (strain SN15 / ATCC MYA-4574 / FGSC 10173) (Glume blotch fungus), this protein is NADH-cytochrome b5 reductase 2 (MCR1).